The primary structure comprises 977 residues: Disks large-associated protein 3 (977 aa).

The segment covering 1–10 (MRGYHGDRGS) has biased composition (basic and acidic residues). Disordered regions lie at residues 1–30 (MRGY…PAAR), 52–90 (AGLG…SSTF), 137–167 (FHTL…ESPS), 181–289 (AKSH…CLDA), 398–417 (AMGD…SPKA), and 529–582 (PGSS…SADG). Residues 53–73 (GLGHLSPEGPLSLSEGPSSVG) show a composition bias toward low complexity. At Ser-58 the chain carries Phosphoserine. Gly residues predominate over residues 74-85 (PEGGPGGVGAGG). The span at 189–201 (PGKRDYNGPKAEG) shows a compositional bias: basic and acidic residues. A compositionally biased stretch (low complexity) spans 202-212 (RSSSGGDSYSG). Residues 221–245 (SHHHHHHHHHHHHQSRHGKRSKSKD) are compositionally biased toward basic residues. The span at 258–271 (GWWSSDDNLDSDSG) shows a compositional bias: low complexity. Residues Ser-404, Ser-407, Ser-410, and Ser-414 each carry the phosphoserine modification. Pro residues predominate over residues 538–547 (APPPIPPGSQ). Residues Ser-641 and Ser-643 each carry the phosphoserine modification. Disordered stretches follow at residues 739–788 (EGYP…RTSP) and 906–939 (EEKK…RQRQ). Pro residues predominate over residues 754–763 (PGPPPVPAPG). 2 stretches are compositionally biased toward basic and acidic residues: residues 767-777 (GRRDSWMERGS) and 925-939 (PVKE…RQRQ). Residues Ser-930, Ser-933, and Ser-965 each carry the phosphoserine modification.

Belongs to the SAPAP family. As to quaternary structure, interacts with DLG1 and DLG4/PSD-95. In terms of tissue distribution, expressed in most brain regions.

Its subcellular location is the cell membrane. It is found in the postsynaptic density. The protein localises to the synapse. Its function is as follows. May play a role in the molecular organization of synapses and neuronal cell signaling. Could be an adapter protein linking ion channel to the subsynaptic cytoskeleton. May induce enrichment of PSD-95/SAP90 at the plasma membrane. The sequence is that of Disks large-associated protein 3 (Dlgap3) from Rattus norvegicus (Rat).